Reading from the N-terminus, the 75-residue chain is UPF0352 protein VIBHAR_03027 (75 aa).

It belongs to the UPF0352 family.

This chain is UPF0352 protein VIBHAR_03027, found in Vibrio campbellii (strain ATCC BAA-1116).